The following is a 156-amino-acid chain: Ribonuclease H (156 aa).

Positions 1-142 constitute an RNase H type-1 domain; sequence MGKQVEIFTD…CDELARAAAN (142 aa). The Mg(2+) site is built by Asp-10, Glu-48, Asp-70, and Asp-134.

This sequence belongs to the RNase H family. In terms of assembly, monomer. Mg(2+) is required as a cofactor.

It localises to the cytoplasm. The catalysed reaction is Endonucleolytic cleavage to 5'-phosphomonoester.. Functionally, endonuclease that specifically degrades the RNA of RNA-DNA hybrids. The sequence is that of Ribonuclease H from Photorhabdus laumondii subsp. laumondii (strain DSM 15139 / CIP 105565 / TT01) (Photorhabdus luminescens subsp. laumondii).